A 64-amino-acid chain; its full sequence is Alpha-conotoxin-like Lp1.7 (64 aa).

The first 21 residues, 1-21 (MGMRMMFTMFLLVVLTTTVVS), serve as a signal peptide directing secretion. Positions 22–41 (FNSDRESNHENRRTSNQITR) are excised as a propeptide. Disulfide bonds link Cys-47-Cys-53 and Cys-48-Cys-61. Positions 49 to 51 (DDP) are lacks the Ser-Xaa-Pro motif that is crucial for potent interaction with nAChR.

It belongs to the conotoxin A superfamily. Expressed by the venom duct.

Its subcellular location is the secreted. Alpha-conotoxins act on postsynaptic membranes, they bind to the nicotinic acetylcholine receptors (nAChR) and thus inhibit them. Has possibly a distinct nAChR binding mode from other alpha-conotoxins, due to a different three residue motif (lacks the Ser-Xaa-Pro motif). This is Alpha-conotoxin-like Lp1.7 from Conus leopardus (Leopard cone).